A 419-amino-acid polypeptide reads, in one-letter code: MEGEELETTGSLSEVFQPEVTMAVTGEPPKPAEEELEEEEEETSPEVIDTLSLLDVLRVSAIMEDIIDQLSILGYIIPVQYERRQSLSQKTSHEGAPMVPSTPKISASLIAKDKPVVSDSKQRGQDFFFKKATKQTTMTLETMRKIQNDRQYFSDVIANAMMEMQACGSFSSLLEALGKERDAKMNFHDVITREGKGRKQIKSLQKQLVDVKRERQMQVQNGNEYIAHLRDQLQEVKAKTNLENLYMKRNTELQVSQTQKKCNRAEELLLEEIEKLRLKTEEENRVHMEIEMFLRNQQQKLEEKLEFWMEKFDKDTEAKQNELNALKAAKASDLAHLQDLAKMIREYEQVIIEDRLEKEKTRKKLEQDDLELRSIVKLQAWWRGTVVRREIGSFKMPKKEKDDSKDAKGKEKDKRRGKK.

2 disordered regions span residues 1–47 and 393–419; these read MEGE…SPEV and SFKMPKKEKDDSKDAKGKEKDKRRGKK. The segment covering 34 to 44 has biased composition (acidic residues); sequence EELEEEEEETS. In terms of domain architecture, IQ spans 371–400; the sequence is ELRSIVKLQAWWRGTVVRREIGSFKMPKKE.

This sequence belongs to the DRC9 family. In terms of assembly, component of the nexin-dynein regulatory complex (N-DRC). Interacts (via IQ domain) with CALM when calcium levels are low. Does not interact with CALM in the presence of Ca(2+). Interacts with the HSP70 proteins HSPA1L and HSPA8. May form a complex with CAMK4 and HSP70.

It localises to the cytoplasm. It is found in the cell projection. The protein resides in the cilium. Its subcellular location is the flagellum. The protein localises to the cytoskeleton. It localises to the flagellum axoneme. Functionally, component of the nexin-dynein regulatory complex (N-DRC), a key regulator of ciliary/flagellar motility which maintains the alignment and integrity of the distal axoneme and regulates microtubule sliding in motile axonemes. Binds calmodulin when cellular Ca(2+) levels are low and thereby contributes to the regulation of calcium and calmodulin-dependent protein kinase IV (CAMK4) activity; contributes to the regulation of CAMK4 signaling cascades. Required for normal axoneme assembly in sperm flagella, normal sperm tail formation and for male fertility. The protein is Dynein regulatory complex protein 9 (Iqcg) of Rattus norvegicus (Rat).